We begin with the raw amino-acid sequence, 120 residues long: MPVYVDYDVPADLQERALESLEVARDTGSVKKGTNETTKAIERGNADIVFVAEDVSPEEIVMHLPELAAEKGIEVVFVETQDELGNAAGLEVGSAAAAVVAAGDAEDEIEDISTKVEDLQ.

This sequence belongs to the eukaryotic ribosomal protein eL8 family. In terms of assembly, part of the 50S ribosomal subunit. Probably part of the RNase P complex.

It localises to the cytoplasm. In terms of biological role, multifunctional RNA-binding protein that recognizes the K-turn motif in ribosomal RNA, the RNA component of RNase P, box H/ACA, box C/D and box C'/D' sRNAs. In Halobacterium salinarum (strain ATCC 29341 / DSM 671 / R1), this protein is Large ribosomal subunit protein eL8.